A 201-amino-acid chain; its full sequence is Adenylyl-sulfate kinase (201 aa).

Gly35–Ser42 lines the ATP pocket. Catalysis depends on Ser109, which acts as the Phosphoserine intermediate.

It belongs to the APS kinase family.

The catalysed reaction is adenosine 5'-phosphosulfate + ATP = 3'-phosphoadenylyl sulfate + ADP + H(+). The protein operates within sulfur metabolism; hydrogen sulfide biosynthesis; sulfite from sulfate: step 2/3. Its function is as follows. Catalyzes the synthesis of activated sulfate. The polypeptide is Adenylyl-sulfate kinase (Salmonella arizonae (strain ATCC BAA-731 / CDC346-86 / RSK2980)).